The primary structure comprises 3140 residues: MSTIVFGSFTCHLDAAIHQDNADRLAKAWTRPENRQVSNVHLLCRRAAKSLINTYESATASAWKGLEEKLQPMFAKREFSKTVTKRKGLRCFKESSEKFIEKKLRKQYQEERERFQFLNGPDAIVNQISVDKCEASVRVPFPHIIEKPSFATPSMKKKVVFTKVRMSEASLQLFMRRVAANAKANGQKVEIIGRKRVVGNYTTKSRLTYFRTHVRHLDGSKPRYDLVLDEATKKILQLFANTSGFHHVHKKGEVTPGMSGFVVNPMNLSDPMQVYDTDLFIVRGKHNSILVDSRCKVSKEQSNEIIHYSDPGKQFWDGFTNSFMQCKLRETDHQCTSDLDVKECGYVAALVCQAIIPCGKITCLQCAQKYSYMSQQEIRDRFSTVIEQHEKTVMDNYPQFSHVLAFLKRYRELMRVENQNYEAFKDITHMIGERKEAPFSHLNKINELIIKGGMMSAQDYIEASDHLRELARYQKNRTENIRSGSIKAFRNKISSKAHVNMQLMCDNQLDTNGNFVWGQREYHAKRFFRNYFDVIDVSEGYRRHIVRENPRGIRKLAIGNLVMSTNLAALRKQLLGEECIHFEVSKECTSKRGENFVYQCCCVTHEDGTPLESEIISPTKNHLVVGNSGDSKYVDLPTAKGGAMFIAKAGYCYINIFLAMLININEDEAKSFTKTVRDTLVPKLGTWPSMMDLATACHFLAILYPETRNAELPRILVDHEAKIFHVVDSFGSLSTGMHVLKANTINQLISFASDTLDSNMKTYLVGGLEVDKCDEFKNVKLLIRSIYKPQIMEQVLKEEPYLLLMSVLSPGVLMALFNSGSLEKATQYWITRSHSLAAITSMLSSLAAKVSLASTLNAQMSVIDEHAAVLCDSVFVGTKPYASYMMAVKTLERMKARTESDHTLNDLGFSVIRQATPHLVEKSYLQELEQAWKELSWSEKFSAILESQRWRKHIPKPFIPKDGADLGGRYDISVRSLLGNQYKRLRDVVRRKRDDVVCYTHQSMGKLFCKAIGISTSFLPSTLKMFDMLIVFSLLLSIGATCNSMINEHKHLKQLAADREDKKRFKRLQVLHTRLSEKVGCTPTADEFLEYVGGENPDLLKHAEDLIGDGQVVVHQSKRDSQANLERVVAFVALVMMLFDSERSDGVYKILNKLKGIMGSVDQAVQHQSLDDIEDILDEKKLTVDFVLQSNEVAPTVPFDSTFEKWWTNQLETGNVIPHYRTEGHFLEFTRENAAHIANEVMHGSHQDILIRGAVGSGKSTGLPFHLSKKGHVLLIEPTRPLAENVCKQLRGQPFNVNPTLRMRGMSTFGSTPITVMTSGYALHFLANNPTYLDNYKCIIFDECHVHDASAMAFRCLLSEYSYPGKILKVSATPPGHEVDFKTQKEVKVIVEESLSFQQFVSNLGTGCNSDILKHGVNVLVYVASYNEVDTLSKLLTDRSFKVSKVDGRTMKIGNVEIPTSGTQAKPHFVVATNIIENGVTLDIDVVVDFGLKVVPVLDIDNRLVRYTKKSISYGERIQRLGRVGRNKPGAALRIGFTEKGLTQIPPIIATEAAFLCFTYGLPVMTNGVSTSLLAMCTVKQARTMQQFELSPFYTVALVRFDGTMHQEIFRLLKSYRLRDSEVILNKLAIPNSNVCGWMSVRDYKRQGCNLDLDENIRVPFYVKDIPETLHERIWQVVETHKSDAGFGRICSSSACKIAYTLQTDIHSIPRTIKIIDALLEQERTKQAHFRAMTSQSCSSSNFSLSSITSAIRSKYAKDHTEENIGVLQTAKSQLLEFKNLNIDPSYPELVRNFGALECVHHQTKEGVSKALQLKGHWNKRLITRDATLMLGVLGGGAWMIFSYLRDSFKEEVVHQGFNRRQRQKLKFRQARDNRMAREVYGDDSTMADYFGSAYSKKGKSKGKTRGMGTKTRKFVNMYGYDPTDYNFVRFVDPLTGHTLDENPLMDINLVQEHFSQIRNDYIGDDKITMQHIMSNPGIVAYYIKDATQKALKVDLTPHNPLRVCDKTATIAGFPEREFELRQTGHPVFVEPNAIPKINEEGDEEVDHESKSLFRGLRDYNPIASSICQLNNSSGARQSVMFGLGFGGLIVTNQHLFKRNDGELTIRSHHGEFVVKDTKTLKLLPCKGRDIVIIRLPKDFPPFPKRLQFRTPTTEDRVCLIGSNFQTKSISSTMSETSATYPVDNSHFWKHWISTKDGHCGLPIVSTRDGSILGLHSLANSTNTQNFYAAFPDNFETTYLSNQDNDNWIKQWRYNPDEVCWGSLQLKRDIPQSPFTICKLLTDLDGEFVYTQSKTTHWLRDRLEGNLKAVGACPGQLVTKHVVKGKCTLFETYLLTHPEEHEFFRPLMGAYQKSALNKDAYVKDLMKYSKPIVVGAVDCDQFERAVDVVISMLISKGFEECNYVTDPDDIFSALNMKAAVGALYSGKKRDYFKNVSDQDKESFVRASCKRLFMGKKGVWNGSLKAELRPKEKVEANKTRSFTAAPIDTLLGGKVCVDDFNNQFYSLNLHCPWSVGMTKFRGGWDKLLRALPEGWIYCDADGSQFDSSLSPYLINAVLNIRLAFMEEWDIGEQMLSNLYTEIVYTPIATPDGTIVKKFKGNNSGQPSTVVDNTLMVILAMTYSLLKLGYHPDTHDCICRYFVNGDDLVLAVHPAYESIYDELQEHFSQLGLNYTFATKTENKEELWFMSHKGVLYDDMYIPKLEPERIVSILEWDRSNEPIHRLEAICASMVEAWGYKELLREIRKFYSWVLEQAPYNALSKDGKAPYIAETALKKLYTDTEASETEIERYLEAFYDDFNDDGESNVVVHQADEREDEEEVDAGKPSVVTAPAATSPILQPPPVIQPAPRTTASMLNPIFTPATTQPATKPVSQVSQPQLQTFGTYGNEDASPSNSNALVNTNRDRDVDAGSVGTFTVPRLKAMTSKLSLPKVKGKAIMNLNHLAHYSPAQVDLSNTRAPQSCFQTWYEGVKRDYDVTDDEMSIILNGLMVWCIENGTSPNINGMWVMMDGETQVEYPIKPLLDHAKPTFRQIMAHFSNVAEAYIEKRNYEKAYMPRYGIQRNLTDYSLARYAFDFYEMTSTTPVRAREAHIQMKAAALRNVQNRLFGLDGNVGTQEEDTERHTAGDVNRNMHNLLGVRGV.

A Peptidase S30 domain is found at 165–308 (RMSEASLQLF…KEQSNEIIHY (144 aa)). Residues histidine 216, aspartate 225, and serine 259 each act as for P1 proteinase activity in the active site. Positions 360 to 363 (KITC) match the Involved in interaction with stylet and aphid transmission motif. Positions 618–620 (PTK) match the Involved in virions binding and aphid transmission motif. The Peptidase C6 domain occupies 644 to 766 (MFIAKAGYCY…DSNMKTYLVG (123 aa)). Active-site for helper component proteinase activity residues include cysteine 652 and histidine 725. The Helicase ATP-binding domain occupies 1240-1392 (EVMHGSHQDI…TQKEVKVIVE (153 aa)). 1253 to 1260 (GAVGSGKS) serves as a coordination point for ATP. The DECH box motif lies at 1342-1345 (DECH). Residues 1411–1570 (DILKHGVNVL…GLPVMTNGVS (160 aa)) form the Helicase C-terminal domain. Positions 1897–1904 (KKGKSKGK) match the Nuclear localization signal motif. Tyrosine 1919 bears the O-(5'-phospho-RNA)-tyrosine mark. One can recognise a Peptidase C4 domain in the interval 2050–2268 (SKSLFRGLRD…VCWGSLQLKR (219 aa)). Active-site for nuclear inclusion protein A activity residues include histidine 2095, aspartate 2130, and cysteine 2200. Positions 2534–2658 (WIYCDADGSQ…AVHPAYESIY (125 aa)) constitute a RdRp catalytic domain. 2 O-linked (GlcNAc) threonine; by host glycosylation sites follow: threonine 2829 and threonine 2834. Serine 2835 is subject to Phosphoserine. Threonine 2851, threonine 2863, threonine 2864, and threonine 2868 each carry an O-linked (GlcNAc) threonine; by host glycan. Serine 2875 carries O-linked (GlcNAc) serine; by host glycosylation. Phosphoserine is present on residues serine 2891, serine 2911, and serine 2928. Phosphothreonine occurs at positions 3064 and 3123.

This sequence belongs to the potyviridae genome polyprotein family. Interacts with host eIF4E protein (via cap-binding region); this interaction mediates the translation of the VPg-viral RNA conjugates. Part of a complex that comprises VPg, RNA, host EIF4E and EIF4G; this interaction mediates the translation of the VPg-viral RNA conjugates. VPg is uridylylated by the polymerase and is covalently attached to the 5'-end of the genomic RNA. This uridylylated form acts as a nucleotide-peptide primer for the polymerase. Post-translationally, genome polyprotein of potyviruses undergoes post-translational proteolytic processing by the main proteinase NIa-pro resulting in the production of at least ten individual proteins. The P1 proteinase and the HC-pro cleave only their respective C-termini autocatalytically. 6K1 is essential for proper proteolytic separation of P3 from CI.

The protein resides in the host cytoplasmic vesicle. It localises to the host nucleus. It is found in the virion. It carries out the reaction RNA(n) + a ribonucleoside 5'-triphosphate = RNA(n+1) + diphosphate. The enzyme catalyses Hydrolyzes glutaminyl bonds, and activity is further restricted by preferences for the amino acids in P6 - P1' that vary with the species of potyvirus, e.g. Glu-Xaa-Xaa-Tyr-Xaa-Gln-|-(Ser or Gly) for the enzyme from tobacco etch virus. The natural substrate is the viral polyprotein, but other proteins and oligopeptides containing the appropriate consensus sequence are also cleaved.. It catalyses the reaction Hydrolyzes a Gly-|-Gly bond at its own C-terminus, commonly in the sequence -Tyr-Xaa-Val-Gly-|-Gly, in the processing of the potyviral polyprotein.. In terms of biological role, required for aphid transmission and also has proteolytic activity. Only cleaves a Gly-Gly dipeptide at its own C-terminus. Interacts with virions and aphid stylets. Acts as a suppressor of RNA-mediated gene silencing, also known as post-transcriptional gene silencing (PTGS), a mechanism of plant viral defense that limits the accumulation of viral RNAs. May have RNA-binding activity. Functionally, has helicase activity. It may be involved in replication. Indispensable for virus replication. Reduces the abundance of host transcripts related to jasmonic acid biosynthesis therefore altering the host defenses. In order to increase its own stability, decreases host protein degradation pathways. Its function is as follows. Indispensable for virus replication. In terms of biological role, mediates the cap-independent, EIF4E-dependent translation of viral genomic RNAs. Binds to the cap-binding site of host EIF4E and thus interferes with the host EIF4E-dependent mRNA export and translation. VPg-RNA directly binds EIF4E and is a template for transcription. Also forms trimeric complexes with EIF4E-EIF4G, which are templates for translation. Functionally, has RNA-binding and proteolytic activities. An RNA-dependent RNA polymerase that plays an essential role in the virus replication. Its function is as follows. Involved in aphid transmission, cell-to-cell and systemis movement, encapsidation of the viral RNA and in the regulation of viral RNA amplification. The chain is Genome polyprotein from Prunus armeniaca (Apricot).